Consider the following 119-residue polypeptide: Fluoride-specific ion channel FluC (119 aa).

3 helical membrane-spanning segments follow: residues 37 to 54 (LFAN…AETV), 61 to 83 (LLLI…ETVT), and 93 to 112 (ALSN…WLGL). Residues Gly-69 and Thr-72 each contribute to the Na(+) site.

It belongs to the fluoride channel Fluc/FEX (TC 1.A.43) family.

The protein resides in the cell inner membrane. It catalyses the reaction fluoride(in) = fluoride(out). Na(+) is not transported, but it plays an essential structural role and its presence is essential for fluoride channel function. In terms of biological role, fluoride-specific ion channel. Important for reducing fluoride concentration in the cell, thus reducing its toxicity. The sequence is that of Fluoride-specific ion channel FluC from Neisseria meningitidis serogroup C (strain 053442).